Consider the following 236-residue polypeptide: tRNA1(Val) (adenine(37)-N6)-methyltransferase (236 aa).

This sequence belongs to the methyltransferase superfamily. tRNA (adenine-N(6)-)-methyltransferase family.

Its subcellular location is the cytoplasm. The enzyme catalyses adenosine(37) in tRNA1(Val) + S-adenosyl-L-methionine = N(6)-methyladenosine(37) in tRNA1(Val) + S-adenosyl-L-homocysteine + H(+). Specifically methylates the adenine in position 37 of tRNA(1)(Val) (anticodon cmo5UAC). The polypeptide is tRNA1(Val) (adenine(37)-N6)-methyltransferase (Histophilus somni (strain 2336) (Haemophilus somnus)).